The chain runs to 755 residues: Cellulose synthase-like protein B3 (755 aa).

The next 2 helical transmembrane spans lie at 24–44 (VVDL…ILLM) and 51–71 (WVVA…ITSI). Active-site residues include D136 and D461. 6 helical membrane-spanning segments follow: residues 534-556 (YLYI…LPAY), 569-589 (VYLG…LWEF), 615-635 (LFSI…VFIV), 674-694 (FLPG…CSVG), 702-722 (GSGL…LPFL), and 733-753 (IPWS…VFSV).

Belongs to the glycosyltransferase 2 family. Plant cellulose synthase-like B subfamily. As to expression, expressed in young seedlings, primarily in the vascular tissue.

It localises to the golgi apparatus membrane. Functionally, thought to be a Golgi-localized beta-glycan synthase that polymerize the backbones of noncellulosic polysaccharides (hemicelluloses) of plant cell wall. This chain is Cellulose synthase-like protein B3 (CSLB3), found in Arabidopsis thaliana (Mouse-ear cress).